Consider the following 392-residue polypeptide: MKPFARRALLTAEPIRALLLAASLLAATLGLMPAEAFGASRIKDIADFEGVRDNMLVGYGLVVGLNSTGDSLTNAPFTKESLTGMLERLGVNIRDKTGAISSQLTPKNVAAVMITATLPPFSRQGTRIDINVSAMGDAKDLRGGTLLVTPLIGADGEVYAVGQGQVATGGFTASGASGSSVTKGVPTAGRIANGAIVERELPFEMSHLESVKVSLRNPDFTTSRRIAQAINSFLGGDMARPVDPGTVQIAVPPGYRGNVVGLLTDVEQLRVEPDQMARVVVDEVSGTIVMGENVRISTVAIAQGQLTIRITETPQVSQPSPFSDAGTTTTVQRTDIQVDEGAGNKLAVVPHKVTLQELVEGLNSLGIGPRDLITILQAIKAAGALQAELEVL.

Positions 1–38 are cleaved as a signal peptide; sequence MKPFARRALLTAEPIRALLLAASLLAATLGLMPAEAFG.

This sequence belongs to the FlgI family. The basal body constitutes a major portion of the flagellar organelle and consists of four rings (L,P,S, and M) mounted on a central rod.

It is found in the periplasm. It localises to the bacterial flagellum basal body. In terms of biological role, assembles around the rod to form the L-ring and probably protects the motor/basal body from shearing forces during rotation. This Paramagnetospirillum magneticum (strain ATCC 700264 / AMB-1) (Magnetospirillum magneticum) protein is Flagellar P-ring protein.